A 549-amino-acid polypeptide reads, in one-letter code: Longitudinals lacking protein, isoforms H/M/V (549 aa).

Positions 32 to 97 constitute a BTB domain; it reads VDCTLAAEGK…MYRGEVNISQ (66 aa). 2 disordered regions span residues 115–200 and 228–340; these read LSDN…SSVL and SSGP…ASAS. 4 stretches are compositionally biased toward low complexity: residues 162–175, 228–251, 263–293, and 329–340; these read SGDV…SSSP, SSGP…LTST, TSST…QTTS, and NSATGPNPASAS.

As to expression, mostly neuronal.

Its subcellular location is the nucleus. In terms of biological role, putative transcription factor required for axon growth and guidance in the central and peripheral nervous systems. Repels CNS axons away from the midline by promoting the expression of the midline repellent sli and its receptor robo. This chain is Longitudinals lacking protein, isoforms H/M/V, found in Drosophila melanogaster (Fruit fly).